A 413-amino-acid chain; its full sequence is THAP domain-containing protein 5 (413 aa).

The THAP-type zinc-finger motif lies at 1-85 (MPRYCAASYC…LKHTAVPTIF (85 aa)). The segment at 84-118 (IFSSPDDEEKGSSQNSPQEIRREDQEETTKNVESK) is disordered. Residues 102 to 118 (EIRREDQEETTKNVESK) are compositionally biased toward basic and acidic residues. A coiled-coil region spans residues 375–399 (RLRSLEALIGQLKQENLLSEEKLKI).

The protein resides in the nucleus. This Gallus gallus (Chicken) protein is THAP domain-containing protein 5 (THAP5).